The chain runs to 223 residues: Deoxyribose-phosphate aldolase (223 aa).

D92 functions as the Proton donor/acceptor in the catalytic mechanism. K154 (schiff-base intermediate with acetaldehyde) is an active-site residue. K182 serves as the catalytic Proton donor/acceptor.

It belongs to the DeoC/FbaB aldolase family. DeoC type 1 subfamily.

The protein resides in the cytoplasm. It carries out the reaction 2-deoxy-D-ribose 5-phosphate = D-glyceraldehyde 3-phosphate + acetaldehyde. Its pathway is carbohydrate degradation; 2-deoxy-D-ribose 1-phosphate degradation; D-glyceraldehyde 3-phosphate and acetaldehyde from 2-deoxy-alpha-D-ribose 1-phosphate: step 2/2. Functionally, catalyzes a reversible aldol reaction between acetaldehyde and D-glyceraldehyde 3-phosphate to generate 2-deoxy-D-ribose 5-phosphate. The sequence is that of Deoxyribose-phosphate aldolase from Haemophilus influenzae (strain ATCC 51907 / DSM 11121 / KW20 / Rd).